Reading from the N-terminus, the 861-residue chain is Nuclear cap-binding protein complex subunit 1 (861 aa).

The Nuclear localization signal motif lies at 22-30; it reads RMPKRQRIP. The MIF4G domain maps to 36–264; the sequence is CKEMMPDIRT…LVRVVLPNVK (229 aa).

Belongs to the NCBP1 family. Component of the nuclear cap-binding complex (CBC), a heterodimer composed of STO1/CBC1 and CBC2 that interacts with capped RNAs. The complex interacts strongly with the importin subunit alpha SRP1. The SRP1-CBC trimer also binds to capped RNAs, but formation of the importin alpha/beta heterodimer upon binding of KAP95 to SRP1 in the cytoplasm causes dissociation of CBC from the RNA. The CBC complex is part of the commitment complex 1 (CC1), binding to the cap of pre-mRNA and interacting with U1 snRNP subunits MUD2 and SNU56. The CBC complex is part of the NRD1 complex, composed of CBC2, NAB1, NRD1, SEN1 and STO1/CBC2. The CBC complex also interacts with NPL3 and eIF4G (TIF4631 and TIF4632).

It is found in the nucleus. It localises to the cytoplasm. The protein resides in the perinuclear region. Its function is as follows. Component of the CBC complex, which binds co-transcriptionally to the 5'-cap of pre-mRNAs and is involved in maturation, export and degradation of nuclear mRNAs. The CBC complex is required for efficient pre-mRNA splicing through efficient commitment complex and spliceosome formation. Together with NPL3, the CBC complex is required for export of mRNAs out of the nucleus. The CBC complex is also involved in nuclear mRNA degradation, probably by directing the mRNAs to the sites of degradation. Affects replication of the positive-strand RNA virus BMV. This is Nuclear cap-binding protein complex subunit 1 (STO1) from Saccharomyces cerevisiae (strain ATCC 204508 / S288c) (Baker's yeast).